Reading from the N-terminus, the 258-residue chain is Imidazole glycerol phosphate synthase subunit HisF (258 aa).

Catalysis depends on residues Asp11 and Asp130.

Belongs to the HisA/HisF family. In terms of assembly, heterodimer of HisH and HisF.

Its subcellular location is the cytoplasm. The catalysed reaction is 5-[(5-phospho-1-deoxy-D-ribulos-1-ylimino)methylamino]-1-(5-phospho-beta-D-ribosyl)imidazole-4-carboxamide + L-glutamine = D-erythro-1-(imidazol-4-yl)glycerol 3-phosphate + 5-amino-1-(5-phospho-beta-D-ribosyl)imidazole-4-carboxamide + L-glutamate + H(+). It functions in the pathway amino-acid biosynthesis; L-histidine biosynthesis; L-histidine from 5-phospho-alpha-D-ribose 1-diphosphate: step 5/9. Its function is as follows. IGPS catalyzes the conversion of PRFAR and glutamine to IGP, AICAR and glutamate. The HisF subunit catalyzes the cyclization activity that produces IGP and AICAR from PRFAR using the ammonia provided by the HisH subunit. This is Imidazole glycerol phosphate synthase subunit HisF from Yersinia pseudotuberculosis serotype O:3 (strain YPIII).